A 103-amino-acid polypeptide reads, in one-letter code: Small ribosomal subunit protein uS10 (103 aa).

The protein belongs to the universal ribosomal protein uS10 family. Part of the 30S ribosomal subunit.

Functionally, involved in the binding of tRNA to the ribosomes. This chain is Small ribosomal subunit protein uS10, found in Buchnera aphidicola subsp. Acyrthosiphon pisum (strain 5A).